We begin with the raw amino-acid sequence, 255 residues long: Small ribosomal subunit protein uS2 (255 aa).

The segment at 233-255 (DFVAEEAASEESLEELAEIVEGK) is disordered.

This sequence belongs to the universal ribosomal protein uS2 family.

This Lactococcus lactis subsp. lactis (strain IL1403) (Streptococcus lactis) protein is Small ribosomal subunit protein uS2 (rpsB).